The sequence spans 314 residues: Ribosome production factor 2 homolog (314 aa).

One can recognise a Brix domain in the interval 28 to 238; that stretch reads KKTLILHGTK…IRRNRLPNDS (211 aa). The interval 238–314 is disordered; it reads SLMKEAMRTS…VAKKMKVSSE (77 aa). Composition is skewed to basic and acidic residues over residues 239 to 249 and 275 to 314; these read LMKEAMRTSKD and QKLK…VSSE.

This sequence belongs to the RPF2 family.

The protein resides in the nucleus. The protein localises to the nucleolus. This chain is Ribosome production factor 2 homolog, found in Arabidopsis thaliana (Mouse-ear cress).